Reading from the N-terminus, the 319-residue chain is Large ribosomal subunit protein uL29m (319 aa).

A disordered region spans residues 1 to 55 (MWKRSFHSQGGPLRARTKFTKPKPKQPVLPKDKIRPPTQLTHHSNNLRITEPIPP). Residues 15-24 (ARTKFTKPKP) show a composition bias toward basic residues. Over residues 38 to 48 (TQLTHHSNNLR) the composition is skewed to polar residues.

Belongs to the universal ribosomal protein uL29 family. In terms of assembly, component of the mitochondrial large ribosomal subunit. Mature mitochondrial ribosomes consist of a small (37S) and a large (54S) subunit. The 37S subunit contains at least 33 different proteins and 1 molecule of RNA (15S). The 54S subunit contains at least 45 different proteins and 1 molecule of RNA (21S).

The protein localises to the mitochondrion. This is Large ribosomal subunit protein uL29m (MRPL4) from Saccharomyces cerevisiae (strain YJM789) (Baker's yeast).